The following is a 500-amino-acid chain: Probable malate:quinone oxidoreductase (500 aa).

It belongs to the MQO family. It depends on FAD as a cofactor.

It carries out the reaction (S)-malate + a quinone = a quinol + oxaloacetate. It participates in carbohydrate metabolism; tricarboxylic acid cycle; oxaloacetate from (S)-malate (quinone route): step 1/1. This Bacillus cereus (strain B4264) protein is Probable malate:quinone oxidoreductase.